Consider the following 294-residue polypeptide: Putative glucose-6-phosphate 1-epimerase (294 aa).

2 residues coordinate substrate: R74 and R99. H164 is a catalytic residue. D208 lines the substrate pocket. E267 is an active-site residue.

This sequence belongs to the glucose-6-phosphate 1-epimerase family. In terms of assembly, monomer in solution.

It catalyses the reaction alpha-D-glucose 6-phosphate = beta-D-glucose 6-phosphate. Probably functions as a hexose-6-phosphate 1-epimerase. This chain is Putative glucose-6-phosphate 1-epimerase, found in Salmonella typhimurium (strain LT2 / SGSC1412 / ATCC 700720).